The primary structure comprises 812 residues: Phospholipase D alpha 1 (812 aa).

A propeptide spanning residues M1–G46 is cleaved from the precursor. A C2 domain is found at M1–L130. D190 is a Ca(2+) binding site. Residues T330 to R368 enclose the PLD phosphodiesterase 1 domain. Catalysis depends on residues H335, K337, and D342. H335 is a binding site for a 1,2-diacyl-sn-glycero-3-phosphate. Positions 374 and 408 each coordinate Ca(2+). A 1,2-diacyl-sn-glycero-3-phosphate is bound by residues Q524 and H663. Residues F658–S685 enclose the PLD phosphodiesterase 2 domain. Residues H663, K665, and D670 contribute to the active site. E724 contributes to the Ca(2+) binding site.

Belongs to the phospholipase D family. C2-PLD subfamily. As to quaternary structure, monomer. Requires Ca(2+) as cofactor. As to expression, expressed in leaves, roots, developing seeds and cultured cells.

It carries out the reaction a 1,2-diacyl-sn-glycero-3-phosphocholine + H2O = a 1,2-diacyl-sn-glycero-3-phosphate + choline + H(+). Functionally, hydrolyzes glycerol-phospholipids at the terminal phosphodiesteric bond. Plays an important role in various cellular processes. This Oryza sativa subsp. japonica (Rice) protein is Phospholipase D alpha 1 (PLD1).